The sequence spans 381 residues: Fe-S cluster assembly protein DRE2 (381 aa).

The N-terminal SAM-like domain stretch occupies residues 8–165 (AQGSGRFLLL…KPDFGAQQAV (158 aa)). A disordered region spans residues 100–134 (RNRDNQIWGSGSDSAAGLGSSDGDGGGGEKMSSSE). Over residues 108–118 (GSGSDSAAGLG) the composition is skewed to low complexity. Gly residues predominate over residues 119-128 (SSDGDGGGGE). The linker stretch occupies residues 166 to 273 (PLKLGRKKNL…EEELLGEYDM (108 aa)). Cysteine 283, cysteine 294, cysteine 297, and cysteine 299 together coordinate [2Fe-2S] cluster. The tract at residues 283-299 (CRPKAGKRRRACKDCTC) is fe-S binding site A. Residues cysteine 344, cysteine 347, cysteine 355, and cysteine 358 each contribute to the [4Fe-4S] cluster site. Short sequence motifs (cx2C motif) lie at residues 344–347 (CGNC) and 355–358 (CDGC). The segment at 344–358 (CGNCALGDAFRCDGC) is fe-S binding site B.

The protein belongs to the anamorsin family. As to quaternary structure, monomer. Interacts with TAH18. Interacts with MIA40. [2Fe-2S] cluster is required as a cofactor. The cofactor is [4Fe-4S] cluster.

The protein localises to the cytoplasm. It localises to the mitochondrion intermembrane space. In terms of biological role, component of the cytosolic iron-sulfur (Fe-S) protein assembly (CIA) machinery required for the maturation of extramitochondrial Fe-S proteins. Part of an electron transfer chain functioning in an early step of cytosolic Fe-S biogenesis, facilitating the de novo assembly of a [4Fe-4S] cluster on the scaffold complex CFD1-NBP35. Electrons are transferred to DRE2 from NADPH via the FAD- and FMN-containing protein TAH18. TAH18-DRE2 are also required for the assembly of the diferric tyrosyl radical cofactor of ribonucleotide reductase (RNR), probably by providing electrons for reduction during radical cofactor maturation in the catalytic small subunit RNR2. This chain is Fe-S cluster assembly protein DRE2, found in Paracoccidioides brasiliensis (strain Pb18).